A 310-amino-acid polypeptide reads, in one-letter code: Cytosolic Fe-S cluster assembly factor NUBP1 homolog (310 aa).

[4Fe-4S] cluster-binding residues include cysteine 12, cysteine 26, cysteine 29, and cysteine 35. 66 to 73 (GKGGVGKS) is an ATP binding site. Residues cysteine 240 and cysteine 243 each contribute to the [4Fe-4S] cluster site.

The protein belongs to the Mrp/NBP35 ATP-binding proteins family. NUBP1/NBP35 subfamily. In terms of assembly, heterotetramer of 2 NUBP1 and 2 NUBP2 chains. [4Fe-4S] cluster is required as a cofactor.

The protein localises to the cytoplasm. Functionally, component of the cytosolic iron-sulfur (Fe/S) protein assembly (CIA) machinery. Required for maturation of extramitochondrial Fe-S proteins. The NUBP1-NUBP2 heterotetramer forms a Fe-S scaffold complex, mediating the de novo assembly of an Fe-S cluster and its transfer to target apoproteins. In Brugia malayi (Filarial nematode worm), this protein is Cytosolic Fe-S cluster assembly factor NUBP1 homolog.